The primary structure comprises 175 residues: Diacylglycerol kinase (175 aa).

2 helical membrane passes run 55-75 and 96-116; these read VAPNLLVSFRYAWAGVSYAFA and LLHLEAIAVAVLALTSCLVMI. E118 functions as the Proton acceptor in the catalytic mechanism. E125 lines the a divalent metal cation pocket. Residues 151–171 form a helical membrane-spanning segment; the sequence is VLLAAIAAVIVGGCLLLPPLL.

Belongs to the bacterial diacylglycerol kinase family. Requires Mg(2+) as cofactor.

It is found in the cell membrane. It catalyses the reaction a 1,2-diacyl-sn-glycerol + ATP = a 1,2-diacyl-sn-glycero-3-phosphate + ADP + H(+). Functionally, catalyzes the ATP-dependent phosphorylation of sn-l,2-diacylglycerol (DAG) to phosphatidic acid. This chain is Diacylglycerol kinase (dgkA), found in Synechocystis sp. (strain ATCC 27184 / PCC 6803 / Kazusa).